The primary structure comprises 255 residues: MEKLVLIKVGGKIVEEEETLRQLLNDFAAIEGYKVLVHGGGRSATKLAAQLGIESKMVNGRRITDAETLKVVTMVYGGLVNKNIVAGLQALGVNALGLTGADMNLMRSDKRPVAEVDYGFVGDVKEVNADLLASLIHQGIVPVLAPLTHDKQGHMLNTNADTIAGEAAKALAKHFEVTLMFCFEKKGVLLDENDDESVIPEIDRIAFKGYVEQGIIQGGMIPKLENAYQAIDAGVKQVIITQASEIHQGKGTRVF.

Substrate contacts are provided by residues 40–41, arginine 62, and asparagine 157; that span reads GG.

It belongs to the acetylglutamate kinase family. ArgB subfamily.

It is found in the cytoplasm. It catalyses the reaction N-acetyl-L-glutamate + ATP = N-acetyl-L-glutamyl 5-phosphate + ADP. It functions in the pathway amino-acid biosynthesis; L-arginine biosynthesis; N(2)-acetyl-L-ornithine from L-glutamate: step 2/4. Catalyzes the ATP-dependent phosphorylation of N-acetyl-L-glutamate. The sequence is that of Acetylglutamate kinase from Parabacteroides distasonis (strain ATCC 8503 / DSM 20701 / CIP 104284 / JCM 5825 / NCTC 11152).